A 243-amino-acid chain; its full sequence is Ice-binding protein K3-B1 (243 aa).

Residues 1 to 20 (MFSASSLLAVIALAISSVSA) form the signal peptide.

It belongs to the ice-binding protein family.

Functionally, binds to the surface of ice crystals. Has low thermal hysteresis (TH) activity, which is the ability to lower the freezing point of an aqueous solution below its melting point. The TH activity of this protein is approximately 0.3 degrees Celsius at 11 mM. This Typhula ishikariensis (Gray snow mold fungus) protein is Ice-binding protein K3-B1.